The chain runs to 502 residues: ATP synthase subunit beta (502 aa).

156 to 163 (GGAGVGKT) lines the ATP pocket.

This sequence belongs to the ATPase alpha/beta chains family. In terms of assembly, F-type ATPases have 2 components, CF(1) - the catalytic core - and CF(0) - the membrane proton channel. CF(1) has five subunits: alpha(3), beta(3), gamma(1), delta(1), epsilon(1). CF(0) has three main subunits: a(1), b(2) and c(9-12). The alpha and beta chains form an alternating ring which encloses part of the gamma chain. CF(1) is attached to CF(0) by a central stalk formed by the gamma and epsilon chains, while a peripheral stalk is formed by the delta and b chains.

It is found in the cell membrane. The catalysed reaction is ATP + H2O + 4 H(+)(in) = ADP + phosphate + 5 H(+)(out). Its function is as follows. Produces ATP from ADP in the presence of a proton gradient across the membrane. The catalytic sites are hosted primarily by the beta subunits. The protein is ATP synthase subunit beta of Cellulophaga lytica (Cytophaga lytica).